The following is a 264-amino-acid chain: Phosphonoacetaldehyde hydrolase (264 aa).

Asp9 (nucleophile) is an active-site residue. The Mg(2+) site is built by Asp9 and Ala11. Lys50 functions as the Schiff-base intermediate with substrate in the catalytic mechanism. Asp183 provides a ligand contact to Mg(2+).

This sequence belongs to the HAD-like hydrolase superfamily. PhnX family. Homodimer. Mg(2+) is required as a cofactor.

The enzyme catalyses phosphonoacetaldehyde + H2O = acetaldehyde + phosphate + H(+). Its function is as follows. Involved in phosphonate degradation. This chain is Phosphonoacetaldehyde hydrolase, found in Bacillus cereus (strain ATCC 10987 / NRS 248).